We begin with the raw amino-acid sequence, 143 residues long: Large ribosomal subunit protein uL11 (143 aa).

The protein belongs to the universal ribosomal protein uL11 family. In terms of assembly, part of the ribosomal stalk of the 50S ribosomal subunit. Interacts with L10 and the large rRNA to form the base of the stalk. L10 forms an elongated spine to which L12 dimers bind in a sequential fashion forming a multimeric L10(L12)X complex. In terms of processing, one or more lysine residues are methylated.

Functionally, forms part of the ribosomal stalk which helps the ribosome interact with GTP-bound translation factors. The polypeptide is Large ribosomal subunit protein uL11 (Chromobacterium violaceum (strain ATCC 12472 / DSM 30191 / JCM 1249 / CCUG 213 / NBRC 12614 / NCIMB 9131 / NCTC 9757 / MK)).